Here is a 242-residue protein sequence, read N- to C-terminus: DNA repair protein RecO (242 aa).

It belongs to the RecO family. As to quaternary structure, monomer.

Involved in DNA repair and RecF pathway recombination. The sequence is that of DNA repair protein RecO from Shigella dysenteriae serotype 1 (strain Sd197).